A 610-amino-acid chain; its full sequence is Elongation factor 4 (610 aa).

The region spanning 14 to 196 (NRIRNFSIIA…ALVANIPPPK (183 aa)) is the tr-type G domain. GTP-binding positions include 26–31 (DHGKST) and 143–146 (NKID).

Belongs to the TRAFAC class translation factor GTPase superfamily. Classic translation factor GTPase family. LepA subfamily.

It is found in the cell inner membrane. It carries out the reaction GTP + H2O = GDP + phosphate + H(+). Its function is as follows. Required for accurate and efficient protein synthesis under certain stress conditions. May act as a fidelity factor of the translation reaction, by catalyzing a one-codon backward translocation of tRNAs on improperly translocated ribosomes. Back-translocation proceeds from a post-translocation (POST) complex to a pre-translocation (PRE) complex, thus giving elongation factor G a second chance to translocate the tRNAs correctly. Binds to ribosomes in a GTP-dependent manner. This Legionella pneumophila (strain Lens) protein is Elongation factor 4.